The sequence spans 537 residues: MQETGVHNGAHGADKFGLKNLKGVYWNFAAPQLYEHALKNGEAVLSADGALCADTGEFTGRSPKDKFTVRDATTETTMWWGGNQSITAEQFETLYQDFLKHAEGMTLFAQDLYGGADPSFQIKTRVFTELAWHSLFIRTLLRRPDRAALESFVPELTLIDLPSFRADPKRHGCRSENVVAIDFARKIVLIGGTQYAGEMKKSVFTTLNYYLPEKGVMPMHCSANVGPQGDTAIFFGLSGTGKTTLSADPNRTLIGDDEHGWGKDGVFNFEGGCYAKCIKLSPEAEPEIFAASSRFGAVLENVVLDEITRKPDFDDGSKTENTRSAYPLESIPNASLTGRAGQPKNVVMLAADAFGVMPPIAKLTPAQAMYHFLSGYTAKVAGTERGVTEPEPEFSTCFGSPFLPRDPSVYGNMLRELIAKHDVDCWLVNTGWTGGIYGTGHRMPIKVTRALLTAALDGSLRNVEFRTDPYFGFAVPTSLHGVPSDILDPVKTWADKAAFDATARKLVGMFQKNFAKFEAQVDADVRAAAPDVKMAAE.

3 residues coordinate substrate: R61, Y195, and K201. ATP contacts are provided by residues K201, H220, and 236-244; that span reads GLSGTGKTT. Residues K201 and H220 each coordinate Mn(2+). A Mn(2+)-binding site is contributed by D257. 3 residues coordinate ATP: E285, R323, and T448. R323 serves as a coordination point for substrate.

This sequence belongs to the phosphoenolpyruvate carboxykinase (ATP) family. Mn(2+) serves as cofactor.

Its subcellular location is the cytoplasm. The enzyme catalyses oxaloacetate + ATP = phosphoenolpyruvate + ADP + CO2. The protein operates within carbohydrate biosynthesis; gluconeogenesis. Involved in the gluconeogenesis. Catalyzes the conversion of oxaloacetate (OAA) to phosphoenolpyruvate (PEP) through direct phosphoryl transfer between the nucleoside triphosphate and OAA. This is Phosphoenolpyruvate carboxykinase (ATP) from Rhodopseudomonas palustris (strain HaA2).